We begin with the raw amino-acid sequence, 242 residues long: Segregation and condensation protein A (242 aa).

Belongs to the ScpA family. In terms of assembly, component of a cohesin-like complex composed of ScpA, ScpB and the Smc homodimer, in which ScpA and ScpB bind to the head domain of Smc. The presence of the three proteins is required for the association of the complex with DNA.

It localises to the cytoplasm. Participates in chromosomal partition during cell division. May act via the formation of a condensin-like complex containing Smc and ScpB that pull DNA away from mid-cell into both cell halves. This Lactococcus lactis subsp. cremoris (strain MG1363) protein is Segregation and condensation protein A.